We begin with the raw amino-acid sequence, 142 residues long: Transcription antitermination protein NusB (142 aa).

This sequence belongs to the NusB family.

Functionally, involved in transcription antitermination. Required for transcription of ribosomal RNA (rRNA) genes. Binds specifically to the boxA antiterminator sequence of the ribosomal RNA (rrn) operons. The chain is Transcription antitermination protein NusB from Actinobacillus succinogenes (strain ATCC 55618 / DSM 22257 / CCUG 43843 / 130Z).